A 282-amino-acid chain; its full sequence is Hydrogenase expression/formation protein HoxQ (282 aa).

It belongs to the HupH/HyaF family.

In Cupriavidus necator (strain ATCC 17699 / DSM 428 / KCTC 22496 / NCIMB 10442 / H16 / Stanier 337) (Ralstonia eutropha), this protein is Hydrogenase expression/formation protein HoxQ (hoxQ).